We begin with the raw amino-acid sequence, 179 residues long: Guanosine-3',5'-bis(diphosphate) 3'-pyrophosphohydrolase MESH1 (179 aa).

An N-acetylglycine modification is found at G2. An N6-acetyllysine modification is found at K25. The HD domain maps to 32–127 (YINHPIGVAR…VKLADKLYNL (96 aa)). Residues H35, H61, and D62 each contribute to the Mn(2+) site. Catalysis depends on nucleophile residues E65 and D66. Residue K97 is modified to N6-acetyllysine. A Mn(2+)-binding site is contributed by D122. The residue at position 123 (K123) is an N6-acetyllysine.

The protein belongs to the MESH1 family. Mn(2+) serves as cofactor.

The enzyme catalyses guanosine 3',5'-bis(diphosphate) + H2O = GDP + diphosphate + H(+). Its function is as follows. ppGpp hydrolyzing enzyme involved in starvation response. This Homo sapiens (Human) protein is Guanosine-3',5'-bis(diphosphate) 3'-pyrophosphohydrolase MESH1 (HDDC3).